The sequence spans 447 residues: GTPase Der (447 aa).

2 consecutive EngA-type G domains span residues 4 to 165 and 180 to 357; these read QIIT…PEEE and LQIV…KIWN. GTP-binding positions include 10 to 17, 57 to 61, 119 to 122, 186 to 193, 233 to 237, and 298 to 301; these read GRPNVGKS, DTPGL, NKCE, GRPNAGKS, DTAGL, and NKWD. The KH-like domain occupies 358–443; the sequence is KKITTSKLNE…PIRFTYVKTK (86 aa).

The protein belongs to the TRAFAC class TrmE-Era-EngA-EngB-Septin-like GTPase superfamily. EngA (Der) GTPase family. Associates with the 50S ribosomal subunit.

Functionally, GTPase that plays an essential role in the late steps of ribosome biogenesis. The protein is GTPase Der of Rickettsia rickettsii (strain Iowa).